The chain runs to 596 residues: Aspartate--tRNA(Asp/Asn) ligase (596 aa).

Position 175 (glutamate 175) interacts with L-aspartate. Residues 199-202 form an aspartate region; sequence QMFK. L-aspartate is bound by residues arginine 221 and histidine 451. 221 to 223 is an ATP binding site; it reads RDE. ATP is bound at residue glutamate 485. Arginine 492 contacts L-aspartate. 537–540 lines the ATP pocket; the sequence is GVDR.

The protein belongs to the class-II aminoacyl-tRNA synthetase family. Type 1 subfamily. In terms of assembly, homodimer.

The protein localises to the cytoplasm. It catalyses the reaction tRNA(Asx) + L-aspartate + ATP = L-aspartyl-tRNA(Asx) + AMP + diphosphate. Functionally, aspartyl-tRNA synthetase with relaxed tRNA specificity since it is able to aspartylate not only its cognate tRNA(Asp) but also tRNA(Asn). Reaction proceeds in two steps: L-aspartate is first activated by ATP to form Asp-AMP and then transferred to the acceptor end of tRNA(Asp/Asn). The sequence is that of Aspartate--tRNA(Asp/Asn) ligase from Zymomonas mobilis subsp. mobilis (strain ATCC 31821 / ZM4 / CP4).